Here is a 131-residue protein sequence, read N- to C-terminus: Antitoxin MqsA (131 aa).

Residues Cys-3, Cys-6, Cys-37, and Cys-40 each coordinate Zn(2+). The region spanning 74-127 is the HTH cro/C1-type domain; sequence IVKVRKKLSLTQKEASEIFGGGVNAFSRYEKGNAQPHPSTIKLLRVLDKHPELL. A DNA-binding region (H-T-H motif) is located at residues 85 to 104; it reads QKEASEIFGGGVNAFSRYEK.

As to quaternary structure, homodimer. Crystallizes as a heterotetramer with MqsA, MqsR-MqsA(2)-MqsR. Purifies as a probable heterohexamer of 2 MqsR dimers and 1 MqsA dimer. Binds promoter DNA as a dimer. When the 2 dissociate the MsqR mRNA interferase becomes active. The cofactor is Zn(2+). In terms of processing, degraded in the presence of oxidative stress, maybe by the Lon and/or ClpX proteases.

In terms of biological role, antitoxin component of a type II toxin-antitoxin (TA) system. Labile antitoxin that binds to the MqsR mRNA interferase toxin and neutralizes its endoribonuclease activity. Overexpression prevents MqsR-mediated cessation of cell growth and inhibition of cell proliferation. Initially reported to act as a cotranscription factor with MqsA. Following further experiments, the MqsR-MqsA complex does not bind DNA and all reported data are actually due to a small fraction of free MqsA alone binding DNA. Addition of MqsR to a preformed MqsA-promoter DNA complex causes dissociation of the MqsA-DNA complex, probably causing derepression of MqsA-repressed transcripts. MqsA binds to 2 palindromes in the promoter region of the mqsRA operon activating its transcription. Binds to other promoters, inducing mcbR and spy and repressing cspD among others. Binds to and represses the rpoS promoter, the master stress regulator, resulting in decreased cyclic-di-GMP, reduced stress resistance, increased cell motility and decreased biofilm formation; in these experiments 5 TA systems are missing (lacks MazEF, RelEB, ChpB, YoeB-YefM, YafQ-DinJ). An earlier study showed overexpression alone increases biofilm formation, perhaps by repressing cspD; in these experiments the 5 TA systems are present. Represses the csgD promoter. In the presence of stress, when this protein is degraded, the promoters it represses are derepressed, leading to biofilm formation. This TA system mediates cell growth during bile acid deoxycholate stress by degrading mRNA for probable deoxycholate-binding protein YgiS; bile acid detergents such as deoxycholate are important for host defense against bacterial growth in the gall bladder and duodenum. In Escherichia coli (strain K12), this protein is Antitoxin MqsA.